The chain runs to 128 residues: Ribonuclease P protein component (128 aa).

It belongs to the RnpA family. As to quaternary structure, consists of a catalytic RNA component (M1 or rnpB) and a protein subunit.

The catalysed reaction is Endonucleolytic cleavage of RNA, removing 5'-extranucleotides from tRNA precursor.. Its function is as follows. RNaseP catalyzes the removal of the 5'-leader sequence from pre-tRNA to produce the mature 5'-terminus. It can also cleave other RNA substrates such as 4.5S RNA. The protein component plays an auxiliary but essential role in vivo by binding to the 5'-leader sequence and broadening the substrate specificity of the ribozyme. This chain is Ribonuclease P protein component, found in Parasynechococcus marenigrum (strain WH8102).